A 313-amino-acid polypeptide reads, in one-letter code: uncharacterized protein (313 aa).

The protein to B.subtilis YqxC and T.hyodysenteriae hemolysin TlyA.

This is an uncharacterized protein from Bacillus subtilis (strain 168).